A 324-amino-acid polypeptide reads, in one-letter code: Elongation factor P--(R)-beta-lysine ligase (324 aa).

S75–E77 contacts substrate. ATP-binding positions include R99 to E101 and N108. A substrate-binding site is contributed by Y117. Residue E243 to L244 coordinates ATP. E250 provides a ligand contact to substrate. Position 299 (G299) interacts with ATP.

Belongs to the class-II aminoacyl-tRNA synthetase family. EpmA subfamily. As to quaternary structure, homodimer.

It catalyses the reaction D-beta-lysine + L-lysyl-[protein] + ATP = N(6)-((3R)-3,6-diaminohexanoyl)-L-lysyl-[protein] + AMP + diphosphate + H(+). With EpmB is involved in the beta-lysylation step of the post-translational modification of translation elongation factor P (EF-P). Catalyzes the ATP-dependent activation of (R)-beta-lysine produced by EpmB, forming a lysyl-adenylate, from which the beta-lysyl moiety is then transferred to the epsilon-amino group of a conserved specific lysine residue in EF-P. The chain is Elongation factor P--(R)-beta-lysine ligase from Pseudoalteromonas translucida (strain TAC 125).